A 307-amino-acid chain; its full sequence is Aspartate carbamoyltransferase catalytic subunit (307 aa).

2 residues coordinate carbamoyl phosphate: Arg-59 and Thr-60. Lys-87 is an L-aspartate binding site. Residues Arg-109, His-139, and Gln-142 each coordinate carbamoyl phosphate. Positions 172 and 224 each coordinate L-aspartate. Carbamoyl phosphate is bound by residues Ala-265 and Pro-266.

Belongs to the aspartate/ornithine carbamoyltransferase superfamily. ATCase family. Heterododecamer (2C3:3R2) of six catalytic PyrB chains organized as two trimers (C3), and six regulatory PyrI chains organized as three dimers (R2).

The enzyme catalyses carbamoyl phosphate + L-aspartate = N-carbamoyl-L-aspartate + phosphate + H(+). Its pathway is pyrimidine metabolism; UMP biosynthesis via de novo pathway; (S)-dihydroorotate from bicarbonate: step 2/3. In terms of biological role, catalyzes the condensation of carbamoyl phosphate and aspartate to form carbamoyl aspartate and inorganic phosphate, the committed step in the de novo pyrimidine nucleotide biosynthesis pathway. The polypeptide is Aspartate carbamoyltransferase catalytic subunit (Streptococcus agalactiae serotype Ia (strain ATCC 27591 / A909 / CDC SS700)).